Consider the following 104-residue polypeptide: Guanidinium exporter (104 aa).

The Cytoplasmic portion of the chain corresponds to 1-3 (MSW). Residues 4 to 26 (IILFVAGLLEIVWAVGLKYTHGF) traverse the membrane as a helical segment. The Periplasmic portion of the chain corresponds to 27–32 (TRLTPS). A helical transmembrane segment spans residues 33–50 (IITISAMIVSMGMLSYAM). The Cytoplasmic portion of the chain corresponds to 51–54 (KGLP). A helical transmembrane segment spans residues 55-77 (AGTAYAIWTGIGAVGTAIFGIIV). Over 78–83 (FGESAN) the chain is Periplasmic. The helical transmembrane segment at 84 to 103 (IYRLLSLAMIVFGIIGLKLA) threads the bilayer. Residue serine 104 is a topological domain, cytoplasmic.

The protein belongs to the drug/metabolite transporter (DMT) superfamily. Small multidrug resistance (SMR) (TC 2.A.7.1) family. Gdx/SugE subfamily.

The protein localises to the cell inner membrane. In terms of biological role, guanidinium ion exporter. Couples guanidinium export to the proton motive force, exchanging one guanidinium ion for two protons. The protein is Guanidinium exporter of Proteus vulgaris.